Here is a 426-residue protein sequence, read N- to C-terminus: Tol-Pal system protein TolB (426 aa).

Positions 1–25 (MSITPSLSRRTVMSLLAAGLSPAFA) are cleaved as a signal peptide.

Belongs to the TolB family. As to quaternary structure, the Tol-Pal system is composed of five core proteins: the inner membrane proteins TolA, TolQ and TolR, the periplasmic protein TolB and the outer membrane protein Pal. They form a network linking the inner and outer membranes and the peptidoglycan layer.

It is found in the periplasm. In terms of biological role, part of the Tol-Pal system, which plays a role in outer membrane invagination during cell division and is important for maintaining outer membrane integrity. The sequence is that of Tol-Pal system protein TolB from Polaromonas sp. (strain JS666 / ATCC BAA-500).